The sequence spans 424 residues: Subtilisin-like protease 2 (424 aa).

The first 17 residues, 1 to 17 (MQLLNLGLLLLLPFVAG), serve as a signal peptide directing secretion. Positions 18–123 (EIAPQPEPLR…VHPDQHVYLA (106 aa)) are excised as a propeptide. The 87-residue stretch at 37-123 (QYIVTLKEGL…VHPDQHVYLA (87 aa)) folds into the Inhibitor I9 domain. The Peptidase S8 domain occupies 132-424 (RWGLGYMSSK…RKFTLPKNTK (293 aa)). Catalysis depends on charge relay system residues Asp170 and His202. Residues Asn249, Asn262, and Asn350 are each glycosylated (N-linked (GlcNAc...) asparagine). The Charge relay system role is filled by Ser359. Asn390 carries N-linked (GlcNAc...) asparagine glycosylation.

The protein belongs to the peptidase S8 family.

The protein localises to the secreted. Functionally, secreted subtilisin-like serine protease with keratinolytic activity that contributes to pathogenicity. This Arthroderma otae (Microsporum canis) protein is Subtilisin-like protease 2 (SUB2).